The chain runs to 170 residues: Ribosome maturation factor RimM (170 aa).

Residues 95–168 (EDAYYYHEIV…IIKVQLMEGM (74 aa)) enclose the PRC barrel domain.

It belongs to the RimM family. In terms of assembly, binds ribosomal protein uS19.

The protein resides in the cytoplasm. Its function is as follows. An accessory protein needed during the final step in the assembly of 30S ribosomal subunit, possibly for assembly of the head region. Essential for efficient processing of 16S rRNA. May be needed both before and after RbfA during the maturation of 16S rRNA. It has affinity for free ribosomal 30S subunits but not for 70S ribosomes. The sequence is that of Ribosome maturation factor RimM from Oceanobacillus iheyensis (strain DSM 14371 / CIP 107618 / JCM 11309 / KCTC 3954 / HTE831).